The sequence spans 503 residues: Probable cytosol aminopeptidase (503 aa).

Mn(2+)-binding residues include lysine 274 and aspartate 279. Lysine 286 is an active-site residue. 3 residues coordinate Mn(2+): aspartate 297, aspartate 356, and glutamate 358. Residue arginine 360 is part of the active site.

This sequence belongs to the peptidase M17 family. Requires Mn(2+) as cofactor.

The protein resides in the cytoplasm. It catalyses the reaction Release of an N-terminal amino acid, Xaa-|-Yaa-, in which Xaa is preferably Leu, but may be other amino acids including Pro although not Arg or Lys, and Yaa may be Pro. Amino acid amides and methyl esters are also readily hydrolyzed, but rates on arylamides are exceedingly low.. The enzyme catalyses Release of an N-terminal amino acid, preferentially leucine, but not glutamic or aspartic acids.. Presumably involved in the processing and regular turnover of intracellular proteins. Catalyzes the removal of unsubstituted N-terminal amino acids from various peptides. This is Probable cytosol aminopeptidase from Burkholderia ambifaria (strain MC40-6).